Consider the following 144-residue polypeptide: Bacilliredoxin BT9727_3899 (144 aa).

This sequence belongs to the bacilliredoxin family.

In Bacillus thuringiensis subsp. konkukian (strain 97-27), this protein is Bacilliredoxin BT9727_3899.